A 104-amino-acid polypeptide reads, in one-letter code: L-rhamnose mutarotase (104 aa).

Y18 is a substrate binding site. H22 serves as the catalytic Proton donor. Substrate-binding positions include Y41 and 76–77 (WW).

The protein belongs to the rhamnose mutarotase family. In terms of assembly, homodimer.

It is found in the cytoplasm. It catalyses the reaction alpha-L-rhamnose = beta-L-rhamnose. Its pathway is carbohydrate metabolism; L-rhamnose metabolism. Involved in the anomeric conversion of L-rhamnose. The protein is L-rhamnose mutarotase of Sinorhizobium medicae (strain WSM419) (Ensifer medicae).